Here is a 284-residue protein sequence, read N- to C-terminus: Protein phosphatase 1 regulatory subunit 3B (284 aa).

A PP1-binding motif motif is present at residues 61-64; it reads RVSF. In terms of domain architecture, CBM21 spans 124-232; that stretch reads RNRLQTDHVC…SNKGKNYRII (109 aa). Residue Ser260 is modified to Phosphoserine.

As to quaternary structure, interacts with glycogen, PPP1CC catalytic subunit of PP1 and PYGL. Associates with glycogen particles. Forms complexes with debranching enzyme, glycogen phosphorylase, glycogen synthase and phosphorylase kinase which is necessary for its regulation of PP1 activity.

Acts as a glycogen-targeting subunit for phosphatase PP1. Facilitates interaction of the PP1 with enzymes of the glycogen metabolism and regulates its activity. Suppresses the rate at which PP1 dephosphorylates (inactivates) glycogen phosphorylase and enhances the rate at which it activates glycogen synthase and therefore limits glycogen breakdown. Its activity is inhibited by PYGL, resulting in inhibition of the glycogen synthase and glycogen phosphorylase phosphatase activities of PP1. Dramatically increases basal and insulin-stimulated glycogen synthesis upon overexpression in hepatocytes. The protein is Protein phosphatase 1 regulatory subunit 3B (PPP1R3B) of Bos taurus (Bovine).